We begin with the raw amino-acid sequence, 1072 residues long: Carbamoyl phosphate synthase large chain (1072 aa).

The tract at residues 1–401 is carboxyphosphate synthetic domain; the sequence is MPKYKDINKV…SLLKAVRSLE (401 aa). The ATP site is built by Arg129, Arg169, Gly175, Gly176, Lys208, Leu210, Glu215, Gly241, Val242, His243, Gln284, and Glu298. Positions 133-327 constitute an ATP-grasp 1 domain; that stretch reads KRKMQEIGEP…IAKVAAKIAI (195 aa). 3 residues coordinate Mg(2+): Gln284, Glu298, and Asn300. Positions 284, 298, and 300 each coordinate Mn(2+). Residues 402–544 form an oligomerization domain region; the sequence is IKAYGLRLNN…YIYSTYGEED (143 aa). Residues 545–929 are carbamoyl phosphate synthetic domain; that stretch reads EVEIHEIPKV…ALYKALEGAG (385 aa). An ATP-grasp 2 domain is found at 671–861; it reads SKLLKELNIN…MVKLAVEVAL (191 aa). 10 residues coordinate ATP: Arg707, Lys746, Ile748, Glu752, Gly777, Val778, His779, Ser780, Gln820, and Glu832. Mg(2+)-binding residues include Gln820, Glu832, and Asn834. Residues Gln820, Glu832, and Asn834 each coordinate Mn(2+). Residues 930-1072 form the MGS-like domain; it reads LKIPKKGKIL…QKDNVKNLVL (143 aa). Residues 930–1072 are allosteric domain; the sequence is LKIPKKGKIL…QKDNVKNLVL (143 aa).

Belongs to the CarB family. As to quaternary structure, composed of two chains; the small (or glutamine) chain promotes the hydrolysis of glutamine to ammonia, which is used by the large (or ammonia) chain to synthesize carbamoyl phosphate. Tetramer of heterodimers (alpha,beta)4. The cofactor is Mg(2+). Mn(2+) serves as cofactor.

It catalyses the reaction hydrogencarbonate + L-glutamine + 2 ATP + H2O = carbamoyl phosphate + L-glutamate + 2 ADP + phosphate + 2 H(+). It carries out the reaction hydrogencarbonate + NH4(+) + 2 ATP = carbamoyl phosphate + 2 ADP + phosphate + 2 H(+). It participates in amino-acid biosynthesis; L-arginine biosynthesis; carbamoyl phosphate from bicarbonate: step 1/1. Its pathway is pyrimidine metabolism; UMP biosynthesis via de novo pathway; (S)-dihydroorotate from bicarbonate: step 1/3. Large subunit of the glutamine-dependent carbamoyl phosphate synthetase (CPSase). CPSase catalyzes the formation of carbamoyl phosphate from the ammonia moiety of glutamine, carbonate, and phosphate donated by ATP, constituting the first step of 2 biosynthetic pathways, one leading to arginine and/or urea and the other to pyrimidine nucleotides. The large subunit (synthetase) binds the substrates ammonia (free or transferred from glutamine from the small subunit), hydrogencarbonate and ATP and carries out an ATP-coupled ligase reaction, activating hydrogencarbonate by forming carboxy phosphate which reacts with ammonia to form carbamoyl phosphate. This Thermoanaerobacter sp. (strain X514) protein is Carbamoyl phosphate synthase large chain.